The chain runs to 617 residues: Elongation factor 4 (617 aa).

The 182-residue stretch at 17–198 (AIIRNFCIIA…KIVRDLPAPV (182 aa)) folds into the tr-type G domain. GTP contacts are provided by residues 29 to 34 (DHGKST) and 145 to 148 (NKID).

The protein belongs to the TRAFAC class translation factor GTPase superfamily. Classic translation factor GTPase family. LepA subfamily.

Its subcellular location is the cell membrane. The enzyme catalyses GTP + H2O = GDP + phosphate + H(+). Its function is as follows. Required for accurate and efficient protein synthesis under certain stress conditions. May act as a fidelity factor of the translation reaction, by catalyzing a one-codon backward translocation of tRNAs on improperly translocated ribosomes. Back-translocation proceeds from a post-translocation (POST) complex to a pre-translocation (PRE) complex, thus giving elongation factor G a second chance to translocate the tRNAs correctly. Binds to ribosomes in a GTP-dependent manner. The polypeptide is Elongation factor 4 (Paenarthrobacter aurescens (strain TC1)).